We begin with the raw amino-acid sequence, 466 residues long: Probable fibrosin-1 (466 aa).

K8 participates in a covalent cross-link: Glycyl lysine isopeptide (Lys-Gly) (interchain with G-Cter in SUMO2). R229 and R239 each carry asymmetric dimethylarginine. 2 disordered regions span residues 236-315 and 410-466; these read AWVR…AAAA and LLYS…RADR. Positions 248–272 are enriched in basic and acidic residues; that stretch reads GSDKERPMERREPSVTKEEKDRDLP. S281 carries the phosphoserine modification. Positions 288-311 are enriched in basic and acidic residues; sequence RAGEEGARPAKESVRVKEERKEEA. Positions 442–459 are enriched in pro residues; that stretch reads APPPLVPAPRPSSPPRAP.

The chain is Probable fibrosin-1 (Fbrs) from Mus musculus (Mouse).